Consider the following 304-residue polypeptide: UDP-N-acetylenolpyruvoylglucosamine reductase (304 aa).

In terms of domain architecture, FAD-binding PCMH-type spans 33–212 (MGGLADLFLI…KEMMDDLTHK (180 aa)). The active site involves R176. The Proton donor role is filled by S226. E296 is a catalytic residue.

The protein belongs to the MurB family. Requires FAD as cofactor.

The protein resides in the cytoplasm. It carries out the reaction UDP-N-acetyl-alpha-D-muramate + NADP(+) = UDP-N-acetyl-3-O-(1-carboxyvinyl)-alpha-D-glucosamine + NADPH + H(+). It participates in cell wall biogenesis; peptidoglycan biosynthesis. In terms of biological role, cell wall formation. In Exiguobacterium sibiricum (strain DSM 17290 / CCUG 55495 / CIP 109462 / JCM 13490 / 255-15), this protein is UDP-N-acetylenolpyruvoylglucosamine reductase.